The following is a 309-amino-acid chain: Aspartate carbamoyltransferase catalytic subunit (309 aa).

2 residues coordinate carbamoyl phosphate: arginine 55 and threonine 56. Lysine 85 is a binding site for L-aspartate. Arginine 106, histidine 135, and glutamine 138 together coordinate carbamoyl phosphate. L-aspartate-binding residues include arginine 168 and arginine 230. Carbamoyl phosphate contacts are provided by leucine 268 and proline 269.

It belongs to the aspartate/ornithine carbamoyltransferase superfamily. ATCase family. Heterododecamer (2C3:3R2) of six catalytic PyrB chains organized as two trimers (C3), and six regulatory PyrI chains organized as three dimers (R2).

The catalysed reaction is carbamoyl phosphate + L-aspartate = N-carbamoyl-L-aspartate + phosphate + H(+). The protein operates within pyrimidine metabolism; UMP biosynthesis via de novo pathway; (S)-dihydroorotate from bicarbonate: step 2/3. Catalyzes the condensation of carbamoyl phosphate and aspartate to form carbamoyl aspartate and inorganic phosphate, the committed step in the de novo pyrimidine nucleotide biosynthesis pathway. In Vibrio cholerae serotype O1 (strain ATCC 39541 / Classical Ogawa 395 / O395), this protein is Aspartate carbamoyltransferase catalytic subunit.